A 99-amino-acid chain; its full sequence is Protein AC4 (99 aa).

Belongs to the geminiviridae protein AC4/C4 family.

Functionally, pathogenicity determinant. May act as a suppressor of RNA-mediated gene silencing, also known as post-transcriptional gene silencing (PTGS), a mechanism of plant viral defense that limits the accumulation of viral RNAs. The chain is Protein AC4 from Glycine max (Soybean).